We begin with the raw amino-acid sequence, 651 residues long: Probable potassium transport system protein Kup (651 aa).

12 consecutive transmembrane segments (helical) span residues 41 to 61 (LVLG…IYAF), 82 to 102 (VVSL…VLFV), 130 to 150 (LILG…VITP), 163 to 183 (IVAP…LVTL), 194 to 214 (VAIV…ASGL), 235 to 255 (FLTV…LAMT), 276 to 296 (WLWI…AFIL), 309 to 329 (MIPS…TVIA), 366 to 386 (IYIP…VLGF), 395 to 415 (AYGI…YIVM), 426 to 446 (ALPI…ANII), and 450 to 470 (EGGW…WTWV).

This sequence belongs to the HAK/KUP transporter (TC 2.A.72) family.

Its subcellular location is the cell inner membrane. It catalyses the reaction K(+)(in) + H(+)(in) = K(+)(out) + H(+)(out). In terms of biological role, transport of potassium into the cell. Likely operates as a K(+):H(+) symporter. This chain is Probable potassium transport system protein Kup, found in Brucella suis (strain ATCC 23445 / NCTC 10510).